The sequence spans 230 residues: Antiholin-like protein LrgB (230 aa).

8 consecutive transmembrane segments (helical) span residues 5 to 25 (MTPY…TLLF), 30 to 50 (GFFL…FLKV), 61 to 81 (GGKM…IPLY), 92 to 112 (WQIL…VYIV), 126 to 146 (MLPQ…IGGI), 149 to 169 (ITSF…ALFL), 177 to 197 (PIAK…AVGI), and 209 to 229 (IAVT…MPFI).

It belongs to the CidB/LrgB family. LrgB subfamily.

Its subcellular location is the cell membrane. Its function is as follows. Inhibits the expression or activity of extracellular murein hydrolases by interacting, possibly with LrgA, with the holin-like protein CidA. The LrgAB and CidA proteins may affect the proton motive force of the membrane. May be involved in programmed cell death (PCD), possibly triggering PCD in response to antibiotics and environmental stresses. The chain is Antiholin-like protein LrgB from Bacillus mycoides (strain KBAB4) (Bacillus weihenstephanensis).